The chain runs to 377 residues: Carbonic anhydrase 1 (377 aa).

Positions 1-20 (MARTGALLLVALALAGCAQA) are cleaved as a signal peptide. The Alpha-carbonic anhydrase domain occupies 38 to 318 (DHWDHGLNGE…HHHRRLLHNH (281 aa)). Disulfide bonds link C61–C264, C194–C198, and C296–C351. N-linked (GlcNAc...) asparagine glycosylation is present at N101. H112 (proton acceptor) is an active-site residue. An N-linked (GlcNAc...) asparagine glycan is attached at N135. H163, H165, and H182 together coordinate Zn(2+). Substrate contacts are provided by residues T260 and 260-261 (TT). Residue N297 is glycosylated (N-linked (GlcNAc...) asparagine).

The protein belongs to the alpha-carbonic anhydrase family. In terms of assembly, tetramer of two large and two small subunits linked by two disulfide bonds. The cofactor is Zn(2+).

The protein resides in the periplasm. The catalysed reaction is hydrogencarbonate + H(+) = CO2 + H2O. Its function is as follows. Reversible hydration of carbon dioxide. The protein is Carbonic anhydrase 1 (CAH1) of Chlamydomonas reinhardtii (Chlamydomonas smithii).